The following is a 279-amino-acid chain: Pantothenate synthetase (279 aa).

26 to 33 (MGNLHEGH) is an ATP binding site. His-33 acts as the Proton donor in catalysis. Gln-57 is a binding site for (R)-pantoate. Residue Gln-57 participates in beta-alanine binding. 144-147 (GKKD) is a binding site for ATP. (R)-pantoate is bound at residue Gln-150. ATP-binding positions include Val-173 and 181-184 (LSSR).

This sequence belongs to the pantothenate synthetase family. As to quaternary structure, homodimer.

The protein resides in the cytoplasm. The catalysed reaction is (R)-pantoate + beta-alanine + ATP = (R)-pantothenate + AMP + diphosphate + H(+). It participates in cofactor biosynthesis; (R)-pantothenate biosynthesis; (R)-pantothenate from (R)-pantoate and beta-alanine: step 1/1. Its function is as follows. Catalyzes the condensation of pantoate with beta-alanine in an ATP-dependent reaction via a pantoyl-adenylate intermediate. The sequence is that of Pantothenate synthetase from Burkholderia vietnamiensis (strain G4 / LMG 22486) (Burkholderia cepacia (strain R1808)).